The chain runs to 428 residues: Enolase (428 aa).

Gln-163 contacts (2R)-2-phosphoglycerate. Residue Glu-205 is the Proton donor of the active site. Positions 242, 285, and 312 each coordinate Mg(2+). (2R)-2-phosphoglycerate contacts are provided by Lys-337, Arg-366, Ser-367, and Lys-388. Lys-337 acts as the Proton acceptor in catalysis.

This sequence belongs to the enolase family. Mg(2+) serves as cofactor.

It localises to the cytoplasm. It is found in the secreted. The protein localises to the cell surface. The enzyme catalyses (2R)-2-phosphoglycerate = phosphoenolpyruvate + H2O. Its pathway is carbohydrate degradation; glycolysis; pyruvate from D-glyceraldehyde 3-phosphate: step 4/5. Catalyzes the reversible conversion of 2-phosphoglycerate (2-PG) into phosphoenolpyruvate (PEP). It is essential for the degradation of carbohydrates via glycolysis. The protein is Enolase of Neisseria meningitidis serogroup B (strain ATCC BAA-335 / MC58).